Consider the following 261-residue polypeptide: tRNA pseudouridine synthase A (261 aa).

Asp-51 (nucleophile) is an active-site residue. Tyr-109 is a substrate binding site.

It belongs to the tRNA pseudouridine synthase TruA family. In terms of assembly, homodimer.

It catalyses the reaction uridine(38/39/40) in tRNA = pseudouridine(38/39/40) in tRNA. Formation of pseudouridine at positions 38, 39 and 40 in the anticodon stem and loop of transfer RNAs. The polypeptide is tRNA pseudouridine synthase A (Shewanella sp. (strain ANA-3)).